Reading from the N-terminus, the 500-residue chain is Glutamate--tRNA ligase (500 aa).

The short motif at 12 to 22 is the 'HIGH' region element; that stretch reads PSPTGHLHIGN. Residues 259–263 carry the 'KMSKS' region motif; that stretch reads KLSKR. K262 is an ATP binding site.

This sequence belongs to the class-I aminoacyl-tRNA synthetase family. Glutamate--tRNA ligase type 1 subfamily. As to quaternary structure, monomer.

The protein resides in the cytoplasm. The catalysed reaction is tRNA(Glu) + L-glutamate + ATP = L-glutamyl-tRNA(Glu) + AMP + diphosphate. Its function is as follows. Catalyzes the attachment of glutamate to tRNA(Glu) in a two-step reaction: glutamate is first activated by ATP to form Glu-AMP and then transferred to the acceptor end of tRNA(Glu). The sequence is that of Glutamate--tRNA ligase from Lactobacillus delbrueckii subsp. bulgaricus (strain ATCC 11842 / DSM 20081 / BCRC 10696 / JCM 1002 / NBRC 13953 / NCIMB 11778 / NCTC 12712 / WDCM 00102 / Lb 14).